A 1663-amino-acid polypeptide reads, in one-letter code: Cortactin-binding protein 2 (1663 aa).

Disordered regions lie at residues 1–23 (MATDGASCEPDLSRAPEDAAGAA), 203–222 (KKKTNELEEELSAEKRRSTE), 367–440 (GASV…LHPG), 454–478 (GNANDPDQNGNTTQSPPSRDVSPTS), and 498–616 (RFTS…PKPS). Residues 119-276 (KKMQERMSAQ…EQLKRGSDSK (158 aa)) are a coiled coil. A compositionally biased stretch (low complexity) spans 386 to 396 (PSTGSTPDPTS). Arginine 498 is subject to Asymmetric dimethylarginine. The span at 583 to 593 (TVASTPSSLPQ) shows a compositional bias: polar residues. 6 ANK repeats span residues 709–739 (GRPTLLQQAAAQGNVTLLSMLLNEEGLDINY), 743–772 (DGHSALYSAAKNGHTDCVRLLLSAEAQVNA), 776–805 (NGFTPLCAAAAQGHFECVELLISYDANINH), 809–838 (GGQTPLYLACKNGNKECIKLLLEAGTNRSV), 842–871 (DGWTPVHAAVDTGNVDSLKLLMYHRIPAHG), and 912–942 (EGWTAAHIAASKGFKNCLEILCRHGGLEPER). The disordered stretch occupies residues 1449–1482 (KGESGAWRKVNTSPRRKSGRFSLPTWNKPDLSTE). Serine 1524 bears the Phosphoserine mark. Residues 1581–1663 (QKEVSPLSSH…KNEHLEKPNK (83 aa)) form a disordered region. Residues 1582 to 1599 (KEVSPLSSHQTTECSNSK) are compositionally biased toward polar residues. Residues 1624–1638 (SQNTKRSSSSSNTRQ) show a composition bias toward low complexity. The span at 1639–1648 (IEINNNSKEV) shows a compositional bias: polar residues. Over residues 1653-1663 (HKNEHLEKPNK) the composition is skewed to basic and acidic residues.

In terms of assembly, interacts with CTTN/cortactin SH3 domain. Interacts with STRN, STRN4/zinedin and MOB4/phocein; this interactions mediate the association with the STRIPAK core complex and may regulate dendritic spine distribution of the STRIPAK complex in hippocampal neurons. Activation of glutamate receptors weakens the interaction with STRN and STRN4. Highest expression in brain. Also expressed in kidney, pancreas, lung, heart, liver, skeletal muscle and placenta.

The protein localises to the cytoplasm. It localises to the cell cortex. Its subcellular location is the cell projection. The protein resides in the dendritic spine. In terms of biological role, regulates the dendritic spine distribution of CTTN/cortactin in hippocampal neurons, and thus controls dendritic spinogenesis and dendritic spine maintenance. Associates with the striatin-interacting phosphatase and kinase (STRIPAK) core complex to regulate dendritic spine distribution of the STRIPAK complex in hippocampal neurons. The polypeptide is Cortactin-binding protein 2 (Homo sapiens (Human)).